The chain runs to 472 residues: Transcriptional activator protein rec16 (472 aa).

The C2H2-type zinc finger occupies 420-444 (FICCYCTKPFLSISKLQEHESSCSH).

Its subcellular location is the nucleus. Functionally, transcriptional activator that controls the onset of premeiotic DNA synthesis by regulating res2 and some other factor(s) in a mei2 independent cascade. This is Transcriptional activator protein rec16 (rec16) from Schizosaccharomyces pombe (strain 972 / ATCC 24843) (Fission yeast).